Here is a 179-residue protein sequence, read N- to C-terminus: Interferon lambda-4 (179 aa).

The signal sequence occupies residues 1–21 (MRPSVWAAVAAGLWVLCTVIA). The tract at residues 130–149 (SSRKVPGAQKRRHKPRRADS) is disordered.

It belongs to the lambda interferon family.

It localises to the cytoplasm. Its subcellular location is the secreted. Functionally, cytokine that may trigger an antiviral response activating the JAK-STAT pathway and up-regulating specifically some interferon-stimulated genes. The sequence is that of Interferon lambda-4 (IFNL4) from Homo sapiens (Human).